The primary structure comprises 826 residues: Putative pentatricopeptide repeat-containing protein At1g13630 (826 aa).

16 PPR repeats span residues 228–262 (NEHTYSTVVDGLCRQQKLEDAVLFLRTSEWKDIGP), 263–297 (SVVSFNSIMSGYCKLGFVDMAKSFFCTVLKCGLVP), 298–332 (SVYSHNILINGLCLVGSIAEALELASDMNKHGVEP), 333–367 (DSVTYNILAKGFHLLGMISGAWEVIRDMLDKGLSP), 368–402 (DVITYTILLCGQCQLGNIDMGLVLLKDMLSRGFEL), 404–438 (SIIPCSVMLSGLCKTGRIDEALSLFNQMKADGLSP), 439–473 (DLVAYSIVIHGLCKLGKFDMALWLYDEMCDKRILP), 474–508 (NSRTHGALLLGLCQKGMLLEARSLLDSLISSGETL), 509–543 (DIVLYNIVIDGYAKSGCIEEALELFKVVIETGITP), 544–578 (SVATFNSLIYGYCKTQNIAEARKILDVIKLYGLAP), 579–613 (SVVSYTTLMDAYANCGNTKSIDELRREMKAEGIPP), 614–648 (TNVTYSVIFKGLCRGWKHENCNHVLRERIFEKCKQ), 661–695 (DQITYNTIIQYLCRVKHLSGAFVFLEIMKSRNLDA), 696–730 (SSATYNILIDSLCVYGYIRKADSFIYSLQEQNVSL), 731–765 (SKFAYTTLIKAHCVKGDPEMAVKLFHQLLHRGFNV), and 766–800 (SIRDYSAVINRLCRRHLVNESKFFFCLMLSQGISP).

The protein belongs to the PPR family. P subfamily.

The polypeptide is Putative pentatricopeptide repeat-containing protein At1g13630 (Arabidopsis thaliana (Mouse-ear cress)).